The following is a 330-amino-acid chain: tRNA U34 carboxymethyltransferase (330 aa).

Carboxy-S-adenosyl-L-methionine-binding positions include Lys91, Trp105, Lys110, Gly130, 152–154 (DPS), 181–182 (IE), Met196, Tyr200, and Arg315.

This sequence belongs to the class I-like SAM-binding methyltransferase superfamily. CmoB family. Homotetramer.

The enzyme catalyses carboxy-S-adenosyl-L-methionine + 5-hydroxyuridine(34) in tRNA = 5-carboxymethoxyuridine(34) in tRNA + S-adenosyl-L-homocysteine + H(+). Its function is as follows. Catalyzes carboxymethyl transfer from carboxy-S-adenosyl-L-methionine (Cx-SAM) to 5-hydroxyuridine (ho5U) to form 5-carboxymethoxyuridine (cmo5U) at position 34 in tRNAs. The polypeptide is tRNA U34 carboxymethyltransferase (Shewanella halifaxensis (strain HAW-EB4)).